Here is a 414-residue protein sequence, read N- to C-terminus: Arrestin domain-containing protein 3 (414 aa).

Short sequence motifs (PPxY motif) lie at residues 346 to 349 and 391 to 394; these read PPSY and PPLY. The tract at residues 393–414 is disordered; that stretch reads LYSEIDPNPDQSADDRPSCPSR. Residues 405–414 show a composition bias toward basic and acidic residues; the sequence is ADDRPSCPSR.

Belongs to the arrestin family. Interacts (via PPxY motifs) with NEDD4 (via WW domains). Interacts with ADRB2. Interacts with ADRB3. Interacts with HGS (via PPxY motifs). Does not bind TXN (thioredoxin). Interacts with ITCH. Interacts with WWP1 (via WW domains). In terms of tissue distribution, highly expressed in skeletal muscle, placenta, kidney, lung, liver, blood, adrenal gland, lymph node, mammary gland, thyroid, and trachea. Very low levels in colon, thymus, spleen, small intestine, bladder and bone marrow. Strong expression in differentiated adipocytes compared to preadipocytes. Detected in omental fat and subcutaneous fat tissue.

It localises to the cytoplasm. The protein localises to the cell membrane. It is found in the lysosome. The protein resides in the endosome. Its subcellular location is the early endosome. Functionally, adapter protein that plays a role in regulating cell-surface expression of adrenergic receptors and probably also other G protein-coupled receptors. Plays a role in NEDD4-mediated ubiquitination and endocytosis af activated ADRB2 and subsequent ADRB2 degradation. May recruit NEDD4 to ADRB2. Alternatively, may function as adapter protein that does not play a major role in recruiting NEDD4 to ADRB2, but rather plays a role in a targeting ADRB2 to endosomes. This Homo sapiens (Human) protein is Arrestin domain-containing protein 3 (ARRDC3).